The chain runs to 75 residues: Exodeoxyribonuclease 7 small subunit (75 aa).

The protein belongs to the XseB family. Heterooligomer composed of large and small subunits.

The protein resides in the cytoplasm. The catalysed reaction is Exonucleolytic cleavage in either 5'- to 3'- or 3'- to 5'-direction to yield nucleoside 5'-phosphates.. Functionally, bidirectionally degrades single-stranded DNA into large acid-insoluble oligonucleotides, which are then degraded further into small acid-soluble oligonucleotides. The protein is Exodeoxyribonuclease 7 small subunit of Geobacter sp. (strain M21).